Here is a 1227-residue protein sequence, read N- to C-terminus: Methionine synthase (1227 aa).

In terms of domain architecture, Hcy-binding spans 2-325 (SSKVEQLRAQ…EHIAAMSRAV (324 aa)). Residues C247, C310, and C311 each coordinate Zn(2+). Residues 356–617 (FVNVGERTNV…LPAELRDAVE (262 aa)) form the Pterin-binding domain. Residues 650–744 (QQAEWRSWDV…FIEASKEKGS (95 aa)) enclose the B12-binding N-terminal domain. Methylcob(III)alamin is bound by residues E694, 756–760 (GDVHD), H759, S804, T808, and A860. Residues 746–881 (NGKMVIATVK…SDTQRDDFVA (136 aa)) enclose the B12-binding domain. The AdoMet activation domain occupies 897–1227 (KKPRTPPVTL…LAPNLGYDAD (331 aa)). Residues D946, R1134, and 1189-1190 (YF) each bind S-adenosyl-L-methionine.

Belongs to the vitamin-B12 dependent methionine synthase family. The cofactor is methylcob(III)alamin. Requires Zn(2+) as cofactor.

It carries out the reaction (6S)-5-methyl-5,6,7,8-tetrahydrofolate + L-homocysteine = (6S)-5,6,7,8-tetrahydrofolate + L-methionine. It functions in the pathway amino-acid biosynthesis; L-methionine biosynthesis via de novo pathway; L-methionine from L-homocysteine (MetH route): step 1/1. Its function is as follows. Catalyzes the transfer of a methyl group from methyl-cobalamin to homocysteine, yielding enzyme-bound cob(I)alamin and methionine. Subsequently, remethylates the cofactor using methyltetrahydrofolate. The protein is Methionine synthase (metH) of Salmonella typhimurium (strain LT2 / SGSC1412 / ATCC 700720).